Reading from the N-terminus, the 91-residue chain is Small ribosomal subunit protein bS20 (91 aa).

It belongs to the bacterial ribosomal protein bS20 family.

In terms of biological role, binds directly to 16S ribosomal RNA. This is Small ribosomal subunit protein bS20 from Mycoplasma mobile (strain ATCC 43663 / 163K / NCTC 11711) (Mesomycoplasma mobile).